Consider the following 669-residue polypeptide: DNA ligase (669 aa).

Residues 34-38, 83-84, and E117 contribute to the NAD(+) site; these read DAEYD and SL. Residue K119 is the N6-AMP-lysine intermediate of the active site. NAD(+)-binding residues include R140, E177, K293, and K317. Zn(2+) is bound by residues C411, C414, C429, and C434. The BRCT domain maps to 591–669; it reads RLGGRFTGKT…EDEFLKMLEG (79 aa).

The protein belongs to the NAD-dependent DNA ligase family. LigA subfamily. The cofactor is Mg(2+). It depends on Mn(2+) as a cofactor.

The enzyme catalyses NAD(+) + (deoxyribonucleotide)n-3'-hydroxyl + 5'-phospho-(deoxyribonucleotide)m = (deoxyribonucleotide)n+m + AMP + beta-nicotinamide D-nucleotide.. In terms of biological role, DNA ligase that catalyzes the formation of phosphodiester linkages between 5'-phosphoryl and 3'-hydroxyl groups in double-stranded DNA using NAD as a coenzyme and as the energy source for the reaction. It is essential for DNA replication and repair of damaged DNA. In Geotalea daltonii (strain DSM 22248 / JCM 15807 / FRC-32) (Geobacter daltonii), this protein is DNA ligase.